The primary structure comprises 1374 residues: DNA-directed RNA polymerase subunit beta (1374 aa).

This sequence belongs to the RNA polymerase beta chain family. As to quaternary structure, the RNAP catalytic core consists of 2 alpha, 1 beta, 1 beta' and 1 omega subunit. When a sigma factor is associated with the core the holoenzyme is formed, which can initiate transcription.

It carries out the reaction RNA(n) + a ribonucleoside 5'-triphosphate = RNA(n+1) + diphosphate. In terms of biological role, DNA-dependent RNA polymerase catalyzes the transcription of DNA into RNA using the four ribonucleoside triphosphates as substrates. The protein is DNA-directed RNA polymerase subunit beta of Rhodopseudomonas palustris (strain TIE-1).